Here is a 187-residue protein sequence, read N- to C-terminus: MEEKKALIIVDVQKAFDDKKWGERNNVKAEENISKILELWREKGWTVIYIQHTSDKPHSLFHPKNEGFAIKEIVKPMDEEVIITKTVNSSFIGTNLEEFLKLNEITTVVITGLTTPHCVSTTTRMSGNLGFDTYLISDATAAFGMRDQNDTYYDAATIHNISLATLHDEFATILTTDQLINDFIKTH.

The protein belongs to the isochorismatase family.

This is an uncharacterized protein from Bacillus subtilis (strain 168).